A 108-amino-acid chain; its full sequence is Ig kappa chain V-V region MOPC 149 (108 aa).

Residues 1–23 are framework-1; it reads DIQMTQSPDYLSASVGETVTITC. A disulfide bridge connects residues Cys23 and Cys88. The segment at 24–34 is complementarity-determining-1; that stretch reads RASENIYSYLA. Residues 35-49 are framework-2; sequence WYQQKQGKSPQLLVY. The interval 50 to 56 is complementarity-determining-2; that stretch reads DAKTLVE. Residues 57-88 form a framework-3 region; sequence GVPSRFSGSGSGTQFSLKINSLQPEDFGSYYC. The segment at 89-97 is complementarity-determining-3; it reads QHHYGIPFT. Residues 98–108 form a framework-4 region; it reads FGSGTKLEIKR.

The sequence is that of Ig kappa chain V-V region MOPC 149 from Mus musculus (Mouse).